Reading from the N-terminus, the 377-residue chain is Queuine tRNA-ribosyltransferase (377 aa).

Aspartate 89 functions as the Proton acceptor in the catalytic mechanism. Residues 89–93, aspartate 143, glutamine 188, and glycine 215 contribute to the substrate site; that span reads DSGGF. Positions 246–252 are RNA binding; it reads GVGKPED. Aspartate 265 acts as the Nucleophile in catalysis. Residues 270 to 274 are RNA binding; important for wobble base 34 recognition; that stretch reads TRNAR. Zn(2+) contacts are provided by cysteine 303, cysteine 305, cysteine 308, and histidine 334.

This sequence belongs to the queuine tRNA-ribosyltransferase family. Homodimer. Within each dimer, one monomer is responsible for RNA recognition and catalysis, while the other monomer binds to the replacement base PreQ1. It depends on Zn(2+) as a cofactor.

The enzyme catalyses 7-aminomethyl-7-carbaguanine + guanosine(34) in tRNA = 7-aminomethyl-7-carbaguanosine(34) in tRNA + guanine. Its pathway is tRNA modification; tRNA-queuosine biosynthesis. Its function is as follows. Catalyzes the base-exchange of a guanine (G) residue with the queuine precursor 7-aminomethyl-7-deazaguanine (PreQ1) at position 34 (anticodon wobble position) in tRNAs with GU(N) anticodons (tRNA-Asp, -Asn, -His and -Tyr). Catalysis occurs through a double-displacement mechanism. The nucleophile active site attacks the C1' of nucleotide 34 to detach the guanine base from the RNA, forming a covalent enzyme-RNA intermediate. The proton acceptor active site deprotonates the incoming PreQ1, allowing a nucleophilic attack on the C1' of the ribose to form the product. After dissociation, two additional enzymatic reactions on the tRNA convert PreQ1 to queuine (Q), resulting in the hypermodified nucleoside queuosine (7-(((4,5-cis-dihydroxy-2-cyclopenten-1-yl)amino)methyl)-7-deazaguanosine). The polypeptide is Queuine tRNA-ribosyltransferase (Acinetobacter baumannii (strain AB307-0294)).